Reading from the N-terminus, the 253-residue chain is Electron transfer flavoprotein subunit beta, mitochondrial (253 aa).

Belongs to the ETF beta-subunit/FixA family. Heterodimer of an alpha and a beta subunit. Requires FAD as cofactor. AMP serves as cofactor.

The protein resides in the mitochondrion matrix. Functionally, the electron transfer flavoprotein serves as a specific electron acceptor for several dehydrogenases, including five acyl-CoA dehydrogenases, glutaryl-CoA and sarcosine dehydrogenase. It transfers the electrons to the main mitochondrial respiratory chain via ETF-ubiquinone oxidoreductase (ETF dehydrogenase). The protein is Electron transfer flavoprotein subunit beta, mitochondrial (ETFB) of Oryza sativa subsp. japonica (Rice).